A 273-amino-acid chain; its full sequence is Large ribosomal subunit protein uL2 (273 aa).

The interval 221–263 (RGTAMNPVDHPHGGGEGRNFGKHPVTPWGVQTKGKKTRHNKRT) is disordered. Positions 253-263 (KGKKTRHNKRT) are enriched in basic residues.

This sequence belongs to the universal ribosomal protein uL2 family. In terms of assembly, part of the 50S ribosomal subunit. Forms a bridge to the 30S subunit in the 70S ribosome.

Its function is as follows. One of the primary rRNA binding proteins. Required for association of the 30S and 50S subunits to form the 70S ribosome, for tRNA binding and peptide bond formation. It has been suggested to have peptidyltransferase activity; this is somewhat controversial. Makes several contacts with the 16S rRNA in the 70S ribosome. The protein is Large ribosomal subunit protein uL2 of Actinobacillus succinogenes (strain ATCC 55618 / DSM 22257 / CCUG 43843 / 130Z).